The following is a 476-amino-acid chain: ATP synthase subunit beta (476 aa).

154-161 (GGAGVGKT) lines the ATP pocket.

It belongs to the ATPase alpha/beta chains family. F-type ATPases have 2 components, CF(1) - the catalytic core - and CF(0) - the membrane proton channel. CF(1) has five subunits: alpha(3), beta(3), gamma(1), delta(1), epsilon(1). CF(0) has four main subunits: a(1), b(1), b'(1) and c(9-12).

It is found in the cell inner membrane. It carries out the reaction ATP + H2O + 4 H(+)(in) = ADP + phosphate + 5 H(+)(out). Produces ATP from ADP in the presence of a proton gradient across the membrane. The catalytic sites are hosted primarily by the beta subunits. This Rhodopseudomonas palustris (strain HaA2) protein is ATP synthase subunit beta.